A 513-amino-acid chain; its full sequence is GMP synthase [glutamine-hydrolyzing] (513 aa).

The region spanning 8–198 is the Glutamine amidotransferase type-1 domain; the sequence is MILVLDFGSQ…VFGVCECEGE (191 aa). The active-site Nucleophile is the Cys85. Residues His172 and Glu174 contribute to the active site. Positions 199–388 constitute a GMPS ATP-PPase domain; sequence WSMENFIEIE…LGIPDEIVWR (190 aa). 227–233 contributes to the ATP binding site; sequence GGVDSSV.

As to quaternary structure, homodimer.

It catalyses the reaction XMP + L-glutamine + ATP + H2O = GMP + L-glutamate + AMP + diphosphate + 2 H(+). The protein operates within purine metabolism; GMP biosynthesis; GMP from XMP (L-Gln route): step 1/1. Catalyzes the synthesis of GMP from XMP. The sequence is that of GMP synthase [glutamine-hydrolyzing] (guaA) from Bacillus subtilis (strain 168).